A 2364-amino-acid polypeptide reads, in one-letter code: Actin-binding protein F (2364 aa).

Low complexity predominate over residues 138 to 157 (THQTSPTTETTTTPSSSSSS). 4 disordered regions span residues 138–168 (THQTSPTTETTTTPSSSSSSSHDDKSESTLD), 1087–1111 (QASKYNESEVKDEKSMRNRQVEKRR), 1412–1435 (NNNSNNNNNTTNSNSFGDAKRAPM), and 1929–2088 (KLIS…SEFN). A compositionally biased stretch (basic and acidic residues) spans 1092–1111 (NESEVKDEKSMRNRQVEKRR). Low complexity-rich tracts occupy residues 1412–1428 (NNNSNNNNNTTNSNSFG) and 1932–1960 (SSSTTTDSKSTHSSVISSSSSSNLSTTTD). Residues 1960 to 2017 (DSSKDKKKLEKEEKQREKERKQKEKEDKKREKEELKKKEKEEKKKKEEEKKLKKKSGS) are a coiled coil. Positions 1961–2010 (SSKDKKKLEKEEKQREKERKQKEKEDKKREKEELKKKEKEEKKKKEEEKK) are enriched in basic and acidic residues. Residues 2027 to 2047 (ATPTTTTTTEATTTTTTTTAT) are compositionally biased toward low complexity. Residues 2052–2070 (IKPEKIASDDEHDDHHHDE) show a composition bias toward basic and acidic residues. The segment covering 2071–2081 (HDEEDDDDEPL) has biased composition (acidic residues). The stretch at 2129–2173 (VQRWNSLFKDLRNKVDQVSNKDSVEIDYEKEIDRERRQNKMASNE) forms a coiled coil.

Interacts with actin.

The protein resides in the nucleus. It is found in the cytoplasm. It localises to the cytoskeleton. The chain is Actin-binding protein F (abpF) from Dictyostelium discoideum (Social amoeba).